The primary structure comprises 506 residues: Maturase K (506 aa).

Belongs to the intron maturase 2 family. MatK subfamily.

Its subcellular location is the plastid. It localises to the chloroplast. Functionally, usually encoded in the trnK tRNA gene intron. Probably assists in splicing its own and other chloroplast group II introns. This chain is Maturase K, found in Trifolium wormskioldii (Cows clover).